A 237-amino-acid polypeptide reads, in one-letter code: Probable transcriptional regulatory protein NIS_0560 (237 aa).

This sequence belongs to the TACO1 family.

It localises to the cytoplasm. This is Probable transcriptional regulatory protein NIS_0560 from Nitratiruptor sp. (strain SB155-2).